The following is a 268-amino-acid chain: Hydroxyethylthiazole kinase (268 aa).

A substrate-binding site is contributed by M47. The ATP site is built by R122 and T168. A195 contributes to the substrate binding site.

This sequence belongs to the Thz kinase family. Mg(2+) serves as cofactor.

The enzyme catalyses 5-(2-hydroxyethyl)-4-methylthiazole + ATP = 4-methyl-5-(2-phosphooxyethyl)-thiazole + ADP + H(+). The protein operates within cofactor biosynthesis; thiamine diphosphate biosynthesis; 4-methyl-5-(2-phosphoethyl)-thiazole from 5-(2-hydroxyethyl)-4-methylthiazole: step 1/1. Catalyzes the phosphorylation of the hydroxyl group of 4-methyl-5-beta-hydroxyethylthiazole (THZ). The sequence is that of Hydroxyethylthiazole kinase from Rhizobium rhizogenes (strain K84 / ATCC BAA-868) (Agrobacterium radiobacter).